Reading from the N-terminus, the 201-residue chain is Ras-related protein Rab-9A (201 aa).

An N-acetylalanine modification is found at Ala2. Positions 17, 18, 19, 20, 21, 22, 34, 38, and 39 each coordinate GTP. Mg(2+) is bound at residue Ser21. Residues 31-42 (KFDSQLFHTIGV) carry the Switch 1 motif. Phosphoserine is present on Ser34. Thr39 and Asp62 together coordinate Mg(2+). The Switch 2 signature appears at 64–78 (AGQERFRSLRTPFYR). Residues Gly65, Asn124, Lys125, Asp127, and Lys156 each coordinate GTP. Position 179 is a phosphoserine (Ser179). At Thr187 the chain carries Phosphothreonine. Residues Cys200 and Cys201 are each lipidated (S-geranylgeranyl cysteine).

The protein belongs to the small GTPase superfamily. Rab family. As to quaternary structure, interacts (preferentially in its GTP-bound form) with GCC2 (via its GRIP domain). Interacts (GTP-bound form) with SGSM1; the GDP-bound form has much lower affinity for SGSM1. Interacts with SGSM2. The GTP-bound form but not the GDP-bound form interacts with HPS4 and the BLOC-3 complex (heterodimer of HPS1 and HPS4) but does not interact with HPS1 alone. Interacts (GTP-bound form) with NDE1; two RAB9A-GTP molecules lie on the opposite sides of the NDE1 homodimer; the interaction leads to RAB9A-dynein motor tethering. Interacts (GTP-bound form) with NDEL1. It depends on Mg(2+) as a cofactor.

It is found in the cell membrane. The protein resides in the endoplasmic reticulum membrane. Its subcellular location is the golgi apparatus membrane. It localises to the late endosome. The protein localises to the cytoplasmic vesicle. It is found in the phagosome membrane. The protein resides in the phagosome. Its subcellular location is the cytoplasmic vesicle membrane. It localises to the melanosome. The catalysed reaction is GTP + H2O = GDP + phosphate + H(+). With respect to regulation, regulated by guanine nucleotide exchange factors (GEFs) which promote the exchange of bound GDP for free GTP. Regulated by GTPase activating proteins (GAPs) which increase the GTP hydrolysis activity. Inhibited by GDP dissociation inhibitors (GDIs). Functionally, the small GTPases Rab are key regulators of intracellular membrane trafficking, from the formation of transport vesicles to their fusion with membranes. Rabs cycle between an inactive GDP-bound form and an active GTP-bound form that is able to recruit to membranes different sets of downstream effectors directly responsible for vesicle formation, movement, tethering and fusion. RAB9A is involved in the transport of proteins between the endosomes and the trans-Golgi network (TGN). Specifically uses NDE1/NDEL1 as an effector to interact with the dynein motor complex in order to control retrograde trafficking of RAB9-associated late endosomes to the TGN. Involved in the recruitment of SGSM2 to melanosomes and is required for the proper trafficking of melanogenic enzymes TYR, TYRP1 and DCT/TYRP2 to melanosomes in melanocytes. The chain is Ras-related protein Rab-9A from Rattus norvegicus (Rat).